Consider the following 119-residue polypeptide: Beta-2-microglobulin (119 aa).

The N-terminal stretch at 1–20 is a signal peptide; the sequence is MSRSVALAVLALLSLSGLEA. In terms of domain architecture, Ig-like C1-type spans 25–113; sequence PKIQVYSRHP…HVTLSQPKIV (89 aa). The cysteines at positions 45 and 100 are disulfide-linked.

This sequence belongs to the beta-2-microglobulin family. As to quaternary structure, heterodimer of an alpha chain and a beta chain. Beta-2-microglobulin is the beta-chain of major histocompatibility complex class I molecules. Forms a heterotrimer with MR1 and a metabolite antigen.

It is found in the secreted. Component of the class I major histocompatibility complex (MHC). Involved in the presentation of peptide antigens to the immune system. The polypeptide is Beta-2-microglobulin (B2M) (Pan troglodytes (Chimpanzee)).